The following is a 156-amino-acid chain: MWKRSDHQPKIKAEDGPLVGQFEVLGSVPEPAMPHPLELSEFESFPVFQDIRLHIREVGAQLVKKVNAVFQLDITKNGKTILRWTIDLKNGSGDMYPGPARLPADTVFTIPESVFMELVLGKMNPQKAFLAGKFKVSGKVLLSWKLERVFKDWAKF.

One can recognise an SCP2 domain in the interval 44–156; it reads SFPVFQDIRL…ERVFKDWAKF (113 aa).

This Homo sapiens (Human) protein is SCP2 sterol-binding domain-containing protein 1 (SCP2D1).